The following is a 363-amino-acid chain: MAP kinase kinase mkk-4 (363 aa).

Residues 1 to 38 are disordered; it reads MVQEDDENLRNSMSLRPTSLSTRPTSLSVNGNEKTLPE. Residues 14–28 are compositionally biased toward low complexity; it reads SLRPTSLSTRPTSLS. One can recognise a Protein kinase domain in the interval 66–330; that stretch reads LQDLGAIGNG…YDTLKSFDFY (265 aa). ATP is bound by residues 72–80 and lysine 95; that span reads IGNGNFGTV. Aspartate 194 functions as the Proton acceptor in the catalytic mechanism.

The protein belongs to the protein kinase superfamily. STE Ser/Thr protein kinase family. MAP kinase kinase subfamily. As to expression, expressed in the pharynx, including the corpus, isthmus and terminal bulb.

The protein resides in the cytoplasm. The enzyme catalyses L-seryl-[protein] + ATP = O-phospho-L-seryl-[protein] + ADP + H(+). It carries out the reaction L-threonyl-[protein] + ATP = O-phospho-L-threonyl-[protein] + ADP + H(+). The catalysed reaction is L-tyrosyl-[protein] + ATP = O-phospho-L-tyrosyl-[protein] + ADP + H(+). Functionally, activity is required in presynaptic neurons, in a dose-dependent manner, for normal presynaptic development and morphology. Plays a role in the formation of muscle connections, also called muscle arm extensions, between the body wall and the motor axons in the dorsal and ventral cord. This is MAP kinase kinase mkk-4 (mkk-4) from Caenorhabditis elegans.